A 715-amino-acid polypeptide reads, in one-letter code: Coiled-coil domain-containing protein 170 (715 aa).

3 coiled-coil regions span residues 30–286 (VTRE…AGQQ), 360–418 (ESRD…LVSG), and 478–656 (ENKT…FREV). A required for binding to microtubules and Golgi apparatus location region spans residues 355–591 (MDSREESRDR…DLNKSRDQLE (237 aa)).

As to quaternary structure, binds Golgi-associated microtubules.

Its subcellular location is the golgi apparatus. Its function is as follows. Plays a role in Golgi-associated microtubules organization and stabilization. This chain is Coiled-coil domain-containing protein 170, found in Homo sapiens (Human).